A 121-amino-acid chain; its full sequence is MAFDKDAIIASLKDATILDLADLVSAIEEEFNVSAAAPVAAAGAADGAAAAKSEFDVELTSAGTAKVKVIKAVREATGLGLKEAKDLVDNAPSVVKEGLSEDDANALKESLEATGASVTVK.

Belongs to the bacterial ribosomal protein bL12 family. In terms of assembly, homodimer. Part of the ribosomal stalk of the 50S ribosomal subunit. Forms a multimeric L10(L12)X complex, where L10 forms an elongated spine to which 2 to 4 L12 dimers bind in a sequential fashion. Binds GTP-bound translation factors.

Its function is as follows. Forms part of the ribosomal stalk which helps the ribosome interact with GTP-bound translation factors. Is thus essential for accurate translation. In Leuconostoc mesenteroides subsp. mesenteroides (strain ATCC 8293 / DSM 20343 / BCRC 11652 / CCM 1803 / JCM 6124 / NCDO 523 / NBRC 100496 / NCIMB 8023 / NCTC 12954 / NRRL B-1118 / 37Y), this protein is Large ribosomal subunit protein bL12.